The chain runs to 481 residues: MACRAKELVSLILYKICNPKRSDSKIEEHVEEVEDLKAEAELFRSGSKIEKHVEELEDLKAEAELFRLKAISGTEELKAVADVKRLRTILENNSGTSEECKGEMLKEDLFLPSDLVRLILSRLSFKDNIRSSTVCKAWGDIAASVRVKSRRCWLLYHDAFQDKGVSYGFFDPVEKKKTKEMNLPELSKSSGILYSKDGWLLMNDSLSLIADMYFFNPFTRERIDLPRNRIMESVHTNFAFSCAPTKKSCLVFGINNISSSVAIKISTWRPGATTWLHEDFPNLFPSYFRRLGNILYSDGLFYTASETALGVFDPTARTWNVLPVQPIPMAPRSIRWMTEYEGHIFLVDASSLEPMVYRLNRLESVWEKKETLDGSSIFLSDGSCVMTYGLTGSMSNILYFWSRFINERRSTKSPCPFSRNHPYKYSLYSRSSCEDPEGYYFEYLTWGQKVGVWIEPPHSISIYDYSILDPSEAVNTEYVFI.

An F-box domain is found at 105-156 (LKEDLFLPSDLVRLILSRLSFKDNIRSSTVCKAWGDIAASVRVKSRRCWLLY).

The polypeptide is F-box protein At1g49360 (Arabidopsis thaliana (Mouse-ear cress)).